The sequence spans 380 residues: Ribosomal RNA small subunit methyltransferase, mitochondrial (380 aa).

Residues 1–26 (MILRLKDQTLIKINSTRSYLSSLVFR) constitute a mitochondrion transit peptide. S-adenosyl-L-methionine contacts are provided by His-70, Leu-72, Gly-97, Glu-118, Asp-146, and Asn-161.

This sequence belongs to the class I-like SAM-binding methyltransferase superfamily. rRNA adenine N(6)-methyltransferase family.

Its subcellular location is the mitochondrion. The catalysed reaction is adenosine(1914)/adenosine(1915) in 18S rRNA + 4 S-adenosyl-L-methionine = N(6)-dimethyladenosine(1914)/N(6)-dimethyladenosine(1915) in 18S rRNA + 4 S-adenosyl-L-homocysteine + 4 H(+). N6-adenine methyltransferase which modifies the AA dinucleotide at the plant mitochondrial 18S rRNA nucleotides A1914 and A1915. Not active as mitochondrial transcription factor. This is Ribosomal RNA small subunit methyltransferase, mitochondrial from Arabidopsis thaliana (Mouse-ear cress).